The primary structure comprises 98 residues: Integration host factor subunit alpha (98 aa).

Residues Phe49–Asp70 are disordered.

Belongs to the bacterial histone-like protein family. Heterodimer of an alpha and a beta chain.

Its function is as follows. This protein is one of the two subunits of integration host factor, a specific DNA-binding protein that functions in genetic recombination as well as in transcriptional and translational control. The sequence is that of Integration host factor subunit alpha from Serratia proteamaculans (strain 568).